We begin with the raw amino-acid sequence, 365 residues long: Sesquiterpene synthase 3 (365 aa).

Asp-117, Asn-253, Ser-257, and Glu-261 together coordinate Mg(2+). Residues 117–121 carry the DDXXD motif motif; sequence DDWSD. Residues 253–261 carry the NSE/DTE motif motif; it reads NDILSYNRE. Positions 341 and 342 each coordinate (2E,6E)-farnesyl diphosphate.

The protein belongs to the terpene synthase family. The cofactor is Mg(2+).

The enzyme catalyses (2E,6E)-farnesyl diphosphate = delta-cadinene + diphosphate. Its function is as follows. Terpene cyclase that catalyzes the cyclization of farnesyl diphosphate (FPP) to various sesquiterpenes, including beta-elemene gamma-cadinene, delta-cadinene, and alpha-cadinene. This Postia placenta (strain ATCC 44394 / Madison 698-R) (Brown rot fungus) protein is Sesquiterpene synthase 3.